Reading from the N-terminus, the 857-residue chain is Leucine--tRNA ligase (857 aa).

A 'HIGH' region motif is present at residues 42–52 (PYPSGKLHMGH). The 'KMSKS' region signature appears at 620-624 (KMSKS). Lys-623 is a binding site for ATP.

It belongs to the class-I aminoacyl-tRNA synthetase family.

Its subcellular location is the cytoplasm. The enzyme catalyses tRNA(Leu) + L-leucine + ATP = L-leucyl-tRNA(Leu) + AMP + diphosphate. This is Leucine--tRNA ligase from Thiobacillus denitrificans (strain ATCC 25259 / T1).